Here is a 592-residue protein sequence, read N- to C-terminus: Prospero homeobox protein 2 (592 aa).

Disordered stretches follow at residues 20-56 (EACTEGERSSSPPELDRDSPFPWSQVPSSSPTDPEWF), 85-129 (GNAQ…RKGG), 155-218 (KPRD…LPSG), 308-336 (RLDSPRYPIPPRMTPKPCQDPPANFPLTA), and 353-382 (RYNNGHWSSSPPQDSSSQRHPSSEPALRPW). Positions 95-106 (CPKKARERKRKQ) are enriched in basic residues. A compositionally biased stretch (basic and acidic residues) spans 201-211 (SGAEKHQESEK). Over residues 314–331 (YPIPPRMTPKPCQDPPAN) the composition is skewed to pro residues. The segment covering 360–377 (SSSPPQDSSSQRHPSSEP) has biased composition (low complexity). The 59-residue stretch at 437-495 (QEGLNPGHLKKAKLMFFFTRYPSSNLLKVYFPDVQFNRCITSQMIKWFSNFREFYYIQM) folds into the Prospero-type homeo domain. The homeo-Prospero stretch occupies residues 437–592 (QEGLNPGHLK…EIFKSSSYPQ (156 aa)). Positions 496 to 592 (EKSARQAISD…EIFKSSSYPQ (97 aa)) constitute a Prospero domain.

This sequence belongs to the Prospero homeodomain family.

The protein resides in the nucleus. Its function is as follows. Transcription regulator. Does not seem to be essential for embryonic development and postnatal survival. This Homo sapiens (Human) protein is Prospero homeobox protein 2 (PROX2).